The chain runs to 530 residues: GMP synthase [glutamine-hydrolyzing] (530 aa).

The region spanning R4–D205 is the Glutamine amidotransferase type-1 domain. The active-site Nucleophile is the C84. Residues H179 and E181 contribute to the active site. Residues W206–R398 enclose the GMPS ATP-PPase domain. S233 to S239 provides a ligand contact to ATP.

In terms of assembly, homodimer.

The enzyme catalyses XMP + L-glutamine + ATP + H2O = GMP + L-glutamate + AMP + diphosphate + 2 H(+). It functions in the pathway purine metabolism; GMP biosynthesis; GMP from XMP (L-Gln route): step 1/1. Catalyzes the synthesis of GMP from XMP. In Bordetella bronchiseptica (strain ATCC BAA-588 / NCTC 13252 / RB50) (Alcaligenes bronchisepticus), this protein is GMP synthase [glutamine-hydrolyzing].